A 710-amino-acid chain; its full sequence is Choline transporter-like protein 4 (710 aa).

The Cytoplasmic segment spans residues 1-34 (MGGKQRDEDDEAYGKPVKYDPSFRGPIKNRSCTD). A helical transmembrane segment spans residues 35–55 (VICCVLFLLFILGYIVVGIVA). Residues 56 to 229 (WLYGDPRQVL…KIFEDFAQSW (174 aa)) are Extracellular-facing. N-linked (GlcNAc...) asparagine glycosylation is found at N69, N155, and N197. Residues 230–250 (YWILVALGVALVLSLLFILLL) traverse the membrane as a helical segment. Over 251 to 252 (RL) the chain is Cytoplasmic. A helical membrane pass occupies residues 253–273 (VAGPLVLVLILGVLGVLAYGI). The Extracellular segment spans residues 274-309 (YYCWEEYRVLRDKGASISQLGFTTNLSAYQSVQETW). The N-linked (GlcNAc...) asparagine glycan is linked to N298. A helical transmembrane segment spans residues 310-330 (LAALIVLAVLEAILLLMLIFL). Residues 331-358 (RQRIRIAIALLKEASKAVGQMMSTMFYP) lie on the Cytoplasmic side of the membrane. A helical transmembrane segment spans residues 359–379 (LVTFVLLLICIAYWAMTALYL). Residues 380 to 455 (ATSGQPQYVL…GVLGLFWTLN (76 aa)) lie on the Extracellular side of the membrane. N-linked (GlcNAc...) asparagine glycans are attached at residues N393, N405, and N416. A helical membrane pass occupies residues 456-476 (WVLALGQCVLAGAFASFYWAF). Over 477-501 (HKPQDIPTFPLISAFIRTLRYHTGS) the chain is Cytoplasmic. A helical transmembrane segment spans residues 502–522 (LAFGALILTLVQIARVILEYI). At 523–560 (DHKLRGVQNPVARCIMCCFKCCLWCLEKFIKFLNRNAY) the chain is on the extracellular side. A helical membrane pass occupies residues 561–581 (IMIAIYGKNFCVSAKNAFMLL). Topologically, residues 582 to 597 (MRNIVRVVVLDKVTDL) are cytoplasmic. The chain crosses the membrane as a helical span at residues 598–618 (LLFFGKLLVVGGVGVLSFFFF). Over 619-638 (SGRIPGLGKDFKSPHLNYYW) the chain is Extracellular. Residues 639-659 (LPIMTSILGAYVIASGFFSVF) traverse the membrane as a helical segment. Residues 660 to 710 (GMCVDTLFLCFLEDLERNNGSLDRPYYMSKSLLKILGKKNEAPPDNKKRKK) lie on the Cytoplasmic side of the membrane.

The protein belongs to the CTL (choline transporter-like) family. Post-translationally, N-glycosylated; N-glycosylation of Asn-69, Asn-155 and Asn-393 is required for a proper thiamine pyrophosphate uptake. As to expression, highly expressed in colon, also detected in prostate, trachea and lung. Isoform 3 is also expressed in colon but a lower levels. Expressed in colon at low levels.

The protein resides in the membrane. It localises to the apical cell membrane. The enzyme catalyses choline(out) + n H(+)(in) = choline(in) + n H(+)(out). It carries out the reaction thiamine diphosphate(out) = thiamine diphosphate(in). In terms of biological role, choline transporter that plays a role in the choline-acetylcholine system and is required to the efferent innervation of hair cells in the olivocochlear bundle for the maintenance of physiological function of outer hair cells and the protection of hair cells from acoustic injury. Also described as a thiamine pyrophosphate transporter in colon, may mediate the absorption of microbiota-generated thiamine pyrophosphate and contribute to host thiamine (vitamin B1) homeostasis. Also has thiamine pyrophosphate transporter activity. The chain is Choline transporter-like protein 4 from Homo sapiens (Human).